We begin with the raw amino-acid sequence, 524 residues long: L-tyrosine:2-oxoglutarate aminotransferase atrD (524 aa).

Belongs to the class-I pyridoxal-phosphate-dependent aminotransferase family. Pyridoxal 5'-phosphate serves as cofactor.

The enzyme catalyses L-tyrosine + 2-oxoglutarate = 3-(4-hydroxyphenyl)pyruvate + L-glutamate. It participates in secondary metabolite biosynthesis. Functionally, the L-tyrosine:2-oxoglutarate aminotransferase atrD and the atromentin synthetase atrA catalyze consecutive steps to turn over L-tyrosine into atromentin, which represents the generic precursor molecule for the entire terphenylquinone and pulvinic acid family of pigments, which are widely distributed secondary metabolites in homobasidiomycetes. The first step is catalyzed by atrD which converts L-tyrosine in to 4-hydroxyphenylpyruvate (4-HPP). Adenylation of two 4-HPP monomers by the atrA adenylation (A) domain, ester bond formation between monomers and atrA, and symmetric C-C-bond formation between two monomers by atrA leads to atromentin. The chain is L-tyrosine:2-oxoglutarate aminotransferase atrD from Tapinella panuoides (Oyster rollrim mushroom).